The chain runs to 286 residues: Phosphatidylserine decarboxylase proenzyme (286 aa).

Residues aspartate 90, histidine 147, and serine 252 each act as charge relay system; for autoendoproteolytic cleavage activity in the active site. The active-site Schiff-base intermediate with substrate; via pyruvic acid; for decarboxylase activity is serine 252. The residue at position 252 (serine 252) is a Pyruvic acid (Ser); by autocatalysis.

The protein belongs to the phosphatidylserine decarboxylase family. PSD-B subfamily. Prokaryotic type I sub-subfamily. Heterodimer of a large membrane-associated beta subunit and a small pyruvoyl-containing alpha subunit. The cofactor is pyruvate. In terms of processing, is synthesized initially as an inactive proenzyme. Formation of the active enzyme involves a self-maturation process in which the active site pyruvoyl group is generated from an internal serine residue via an autocatalytic post-translational modification. Two non-identical subunits are generated from the proenzyme in this reaction, and the pyruvate is formed at the N-terminus of the alpha chain, which is derived from the carboxyl end of the proenzyme. The autoendoproteolytic cleavage occurs by a canonical serine protease mechanism, in which the side chain hydroxyl group of the serine supplies its oxygen atom to form the C-terminus of the beta chain, while the remainder of the serine residue undergoes an oxidative deamination to produce ammonia and the pyruvoyl prosthetic group on the alpha chain. During this reaction, the Ser that is part of the protease active site of the proenzyme becomes the pyruvoyl prosthetic group, which constitutes an essential element of the active site of the mature decarboxylase.

The protein resides in the cell membrane. It carries out the reaction a 1,2-diacyl-sn-glycero-3-phospho-L-serine + H(+) = a 1,2-diacyl-sn-glycero-3-phosphoethanolamine + CO2. Its pathway is phospholipid metabolism; phosphatidylethanolamine biosynthesis; phosphatidylethanolamine from CDP-diacylglycerol: step 2/2. Functionally, catalyzes the formation of phosphatidylethanolamine (PtdEtn) from phosphatidylserine (PtdSer). The sequence is that of Phosphatidylserine decarboxylase proenzyme from Pseudomonas fluorescens (strain SBW25).